A 368-amino-acid polypeptide reads, in one-letter code: 3-isopropylmalate dehydrogenase (368 aa).

79 to 91 (GPEWGTSSTVRPE) is a binding site for NAD(+). Substrate-binding residues include arginine 98, arginine 108, arginine 137, and aspartate 226. 3 residues coordinate Mg(2+): aspartate 226, aspartate 251, and aspartate 255. Residue 291 to 303 (GSAPDISGKGIVN) participates in NAD(+) binding.

Belongs to the isocitrate and isopropylmalate dehydrogenases family. In terms of assembly, homodimer. Mg(2+) is required as a cofactor. Requires Mn(2+) as cofactor.

It localises to the cytoplasm. The catalysed reaction is (2R,3S)-3-isopropylmalate + NAD(+) = 4-methyl-2-oxopentanoate + CO2 + NADH. It participates in amino-acid biosynthesis; L-leucine biosynthesis; L-leucine from 3-methyl-2-oxobutanoate: step 3/4. In terms of biological role, catalyzes the oxidation of 3-carboxy-2-hydroxy-4-methylpentanoate (3-isopropylmalate) to 3-carboxy-4-methyl-2-oxopentanoate. The product decarboxylates to 4-methyl-2 oxopentanoate. In Sordaria macrospora, this protein is 3-isopropylmalate dehydrogenase (LEU1).